We begin with the raw amino-acid sequence, 258 residues long: 3-deoxy-manno-octulosonate cytidylyltransferase (258 aa).

Belongs to the KdsB family.

The protein resides in the cytoplasm. The enzyme catalyses 3-deoxy-alpha-D-manno-oct-2-ulosonate + CTP = CMP-3-deoxy-beta-D-manno-octulosonate + diphosphate. The protein operates within nucleotide-sugar biosynthesis; CMP-3-deoxy-D-manno-octulosonate biosynthesis; CMP-3-deoxy-D-manno-octulosonate from 3-deoxy-D-manno-octulosonate and CTP: step 1/1. Its pathway is bacterial outer membrane biogenesis; lipopolysaccharide biosynthesis. Its function is as follows. Activates KDO (a required 8-carbon sugar) for incorporation into bacterial lipopolysaccharide in Gram-negative bacteria. The polypeptide is 3-deoxy-manno-octulosonate cytidylyltransferase (Pasteurella multocida (strain Pm70)).